Consider the following 266-residue polypeptide: Undecaprenyl-diphosphatase (266 aa).

Transmembrane regions (helical) follow at residues 1–21 (MDTL…FLPI), 39–59 (QGLS…VIYF), 83–103 (SKLA…GFTA), 111–131 (LRGP…LWFA), 149–169 (ALLI…RSGI), 183–203 (AAAR…ALLM), 218–238 (ALAL…YFFL), and 246–266 (MTPF…FIYL).

Belongs to the UppP family.

It is found in the cell inner membrane. It carries out the reaction di-trans,octa-cis-undecaprenyl diphosphate + H2O = di-trans,octa-cis-undecaprenyl phosphate + phosphate + H(+). In terms of biological role, catalyzes the dephosphorylation of undecaprenyl diphosphate (UPP). Confers resistance to bacitracin. The sequence is that of Undecaprenyl-diphosphatase from Shewanella amazonensis (strain ATCC BAA-1098 / SB2B).